Here is a 776-residue protein sequence, read N- to C-terminus: Homoaconitase, mitochondrial (776 aa).

The N-terminal 24 residues, 1–24 (MVALRRAVALNAVAIARLQTRALT), are a transit peptide targeting the mitochondrion. 3 residues coordinate [4Fe-4S] cluster: C392, C459, and C462.

This sequence belongs to the aconitase/IPM isomerase family. Requires [4Fe-4S] cluster as cofactor.

Its subcellular location is the mitochondrion. It carries out the reaction (2R,3S)-homoisocitrate = cis-homoaconitate + H2O. Its pathway is amino-acid biosynthesis; L-lysine biosynthesis via AAA pathway; L-alpha-aminoadipate from 2-oxoglutarate: step 3/5. Catalyzes the reversible hydration of cis-homoaconitate to (2R,3S)-homoisocitrate, a step in the alpha-aminoadipate pathway for lysine biosynthesis. The sequence is that of Homoaconitase, mitochondrial (LYS4) from Gibberella zeae (strain ATCC MYA-4620 / CBS 123657 / FGSC 9075 / NRRL 31084 / PH-1) (Wheat head blight fungus).